A 320-amino-acid polypeptide reads, in one-letter code: Glutathione synthetase (320 aa).

The ATP-grasp domain occupies 130–315 (KIFISWFSRF…ITGILIDYIE (186 aa)). 156–212 (WKEKNDIILKPLDAMGGKGVFRIKKDDPNFSVIVETLTNYEKKYCMIQTYLPEVQFG) is a binding site for ATP. Mg(2+)-binding residues include E286 and N288.

The protein belongs to the prokaryotic GSH synthase family. The cofactor is Mg(2+). Mn(2+) is required as a cofactor.

It carries out the reaction gamma-L-glutamyl-L-cysteine + glycine + ATP = glutathione + ADP + phosphate + H(+). The protein operates within sulfur metabolism; glutathione biosynthesis; glutathione from L-cysteine and L-glutamate: step 2/2. The chain is Glutathione synthetase from Buchnera aphidicola subsp. Schizaphis graminum (strain Sg).